Reading from the N-terminus, the 493-residue chain is Glutamate--tRNA ligase (493 aa).

Residues 10–20 carry the 'HIGH' region motif; that stretch reads PSPTGDPHVGT. Positions 251–255 match the 'KMSKS' region motif; it reads KLSKR. Lysine 254 provides a ligand contact to ATP.

The protein belongs to the class-I aminoacyl-tRNA synthetase family. Glutamate--tRNA ligase type 1 subfamily. As to quaternary structure, monomer.

Its subcellular location is the cytoplasm. It carries out the reaction tRNA(Glu) + L-glutamate + ATP = L-glutamyl-tRNA(Glu) + AMP + diphosphate. In terms of biological role, catalyzes the attachment of glutamate to tRNA(Glu) in a two-step reaction: glutamate is first activated by ATP to form Glu-AMP and then transferred to the acceptor end of tRNA(Glu). This chain is Glutamate--tRNA ligase, found in Pseudomonas putida (strain GB-1).